Here is a 675-residue protein sequence, read N- to C-terminus: MDTKSILEELLLKRSQQKKKMSPNNYKERLFVLTKTNLSYYEYDKMKRGSRKGSIEIKKIRCVEKVNLEEQTPVERQYPFQIVYKDGLLYVYASNEESRSQWLKALQKEIRGNPHLLVKYHSGFFVDGKFLCCQQSCKAAPGCTLWEAYANLHTAVNEEKHRVPTFPDRVLKIPRAVPVLKMDAPSSSTTLAQYDNESKKNYGSQPPSSSTSLAQYDSNSKKIYGSQPNFNMQYIPREDFPDWWQVRKLKSSSSSEDVASSNQKERNVNHTTSKISWEFPESSSSEEEENLDDYDWFAGNISRSQSEQLLRQKGKEGAFMVRNSSQVGMYTVSLFSKAVNDKKGTVKHYHVHTNAENKLYLAENYCFDSIPKLIHYHQHNSAGMITRLRHPVSTKANKVPDSVSLGNGIWELKREEITLLKELGSGQFGVVQLGKWKGQYDVAVKMIKEGSMSEDEFFQEAQTMMKLSHPKLVKFYGVCSKEYPIYIVTEYISNGCLLNYLRSHGKGLEPSQLLEMCYDVCEGMAFLESHQFIHRDLAARNCLVDRDLCVKVSDFGMTRYVLDDQYVSSVGTKFPVKWSAPEVFHYFKYSSKSDVWAFGILMWEVFSLGKQPYDLYDNSQVVLKVSQGHRLYRPHLASDTIYQIMYSCWHELPEKRPTFQQLLSSIEPLREKDKH.

One can recognise a PH domain in the interval 4–111; it reads KSILEELLLK…WLKALQKEIR (108 aa). The Btk-type zinc finger occupies 113 to 149; sequence NPHLLVKYHSGFFVDGKFLCCQQSCKAAPGCTLWEAY. Zn(2+)-binding residues include His121, Cys132, Cys133, and Cys143. Phosphotyrosine; by autocatalysis is present on residues Tyr216 and Tyr224. Residues 296 to 392 enclose the SH2 domain; the sequence is WFAGNISRSQ…GMITRLRHPV (97 aa). A Protein kinase domain is found at 417 to 675; it reads ITLLKELGSG…IEPLREKDKH (259 aa). Residues 423-431 and Lys445 each bind ATP; that span reads LGSGQFGVV. The active-site Proton acceptor is Asp536. Tyr566 carries the phosphotyrosine; by SRC and autocatalysis modification. A CAV1-binding motif is present at residues 596–603; the sequence is WAFGILMW.

This sequence belongs to the protein kinase superfamily. Tyr protein kinase family. TEC subfamily. In terms of assembly, interacts with BCAR1, CAV1, MYD88, PTK2/FAK1, RUFY1, RUFY2, STAT3, TIRAP and TNFRSF1B. Zn(2+) is required as a cofactor. In terms of processing, phosphorylated in response to protein I/II and to LPS. Phosphorylation at Tyr-566 by SRC and by autocatalysis leads to activation and is required for STAT3 phosphorylation by BMX. In terms of tissue distribution, highly expressed in cells with great migratory potential, including endothelial cells and metastatic carcinoma cell lines.

The protein resides in the cytoplasm. The catalysed reaction is L-tyrosyl-[protein] + ATP = O-phospho-L-tyrosyl-[protein] + ADP + H(+). With respect to regulation, TEK and vascular endothelial growth factor receptor 1 (FLT1) stimulate BMX tyrosine kinase activity. Activated by integrins through the mediation of PTK2/FAK1. Activated by TNF through the mediation of TNFRSF1B. Its function is as follows. Non-receptor tyrosine kinase that plays central but diverse modulatory roles in various signaling processes involved in the regulation of actin reorganization, cell migration, cell proliferation and survival, cell adhesion, and apoptosis. Participates in signal transduction stimulated by growth factor receptors, cytokine receptors, G-protein coupled receptors, antigen receptors and integrins. Induces tyrosine phosphorylation of BCAR1 in response to integrin regulation. Activation of BMX by integrins is mediated by PTK2/FAK1, a key mediator of integrin signaling events leading to the regulation of actin cytoskeleton and cell motility. Plays a critical role in TNF-induced angiogenesis, and implicated in the signaling of TEK and FLT1 receptors, 2 important receptor families essential for angiogenesis. Required for the phosphorylation and activation of STAT3, a transcription factor involved in cell differentiation. Also involved in interleukin-6 (IL6) induced differentiation. Also plays a role in programming adaptive cytoprotection against extracellular stress in different cell systems, salivary epithelial cells, brain endothelial cells, and dermal fibroblasts. May be involved in regulation of endocytosis through its interaction with an endosomal protein RUFY1. May also play a role in the growth and differentiation of hematopoietic cells; as well as in signal transduction in endocardial and arterial endothelial cells. This is Cytoplasmic tyrosine-protein kinase BMX (BMX) from Homo sapiens (Human).